The sequence spans 113 residues: U11-theraphotoxin-Hhn1a (113 aa).

The signal sequence occupies residues 1-21 (MNTVRVTFLLVFVLAVSLGQA). The propeptide occupies 22-74 (DKDENRMEVQEKTEQGKSYLDFAENLLLQKLEELEAKLLEEDSEESRNSRQKR). Residues 61 to 83 (EEDSEESRNSRQKRCIGEGVPCD) form a disordered region. Disulfide bonds link Cys75–Cys90, Cys82–Cys95, and Cys89–Cys110.

Belongs to the neurotoxin 14 (magi-1) family. 01 (HNTX-16) subfamily. In terms of tissue distribution, expressed by the venom gland.

The protein resides in the secreted. Functionally, probable ion channel inhibitor. In Cyriopagopus hainanus (Chinese bird spider), this protein is U11-theraphotoxin-Hhn1a.